Here is a 190-residue protein sequence, read N- to C-terminus: NAD(P)H-quinone oxidoreductase subunit I (190 aa).

4Fe-4S ferredoxin-type domains follow at residues 55–84 (GRIHFEFDKCIACEVCVRVCPINLPVVDWT) and 95–124 (KHYSIDFGVCIFCGNCVEYCPTNCLSMTEE). Positions 64, 67, 70, 74, 104, 107, 110, and 114 each coordinate [4Fe-4S] cluster. A disordered region spans residues 169-190 (IEPHDLPAGSQRAGKRPEEITD).

This sequence belongs to the complex I 23 kDa subunit family. NDH-1 is composed of at least 11 different subunits. [4Fe-4S] cluster is required as a cofactor.

Its subcellular location is the cellular thylakoid membrane. The enzyme catalyses a plastoquinone + NADH + (n+1) H(+)(in) = a plastoquinol + NAD(+) + n H(+)(out). It catalyses the reaction a plastoquinone + NADPH + (n+1) H(+)(in) = a plastoquinol + NADP(+) + n H(+)(out). Its function is as follows. NDH-1 shuttles electrons from an unknown electron donor, via FMN and iron-sulfur (Fe-S) centers, to quinones in the respiratory and/or the photosynthetic chain. The immediate electron acceptor for the enzyme in this species is believed to be plastoquinone. Couples the redox reaction to proton translocation, and thus conserves the redox energy in a proton gradient. The sequence is that of NAD(P)H-quinone oxidoreductase subunit I from Microcystis aeruginosa (strain NIES-843 / IAM M-2473).